The following is a 121-amino-acid chain: Small ribosomal subunit protein uS13 (121 aa).

The segment at 89–121 is disordered; sequence MRHRRGLPVRGQHTKNNARTRKGKKVSIAGRKK.

The protein belongs to the universal ribosomal protein uS13 family. As to quaternary structure, part of the 30S ribosomal subunit. Forms a loose heterodimer with protein S19. Forms two bridges to the 50S subunit in the 70S ribosome.

Functionally, located at the top of the head of the 30S subunit, it contacts several helices of the 16S rRNA. In the 70S ribosome it contacts the 23S rRNA (bridge B1a) and protein L5 of the 50S subunit (bridge B1b), connecting the 2 subunits; these bridges are implicated in subunit movement. Contacts the tRNAs in the A and P-sites. The chain is Small ribosomal subunit protein uS13 from Pediococcus pentosaceus (strain ATCC 25745 / CCUG 21536 / LMG 10740 / 183-1w).